The following is a 306-amino-acid chain: Putative syntaxin-131 (306 aa).

Met-1 bears the N-acetylmethionine mark. Residues Met-1–Lys-276 lie on the Cytoplasmic side of the membrane. The segment covering Phe-11 to Ser-23 has biased composition (basic and acidic residues). The interval Phe-11 to Leu-35 is disordered. Coiled-coil stretches lie at residues Leu-35–Ala-72 and Lys-134–Arg-162. A t-SNARE coiled-coil homology domain is found at Leu-205–Ala-267. Residues Trp-277–Leu-297 form a helical; Anchor for type IV membrane protein membrane-spanning segment. Residues Lys-298 to Ala-306 lie on the Vesicular side of the membrane.

The protein belongs to the syntaxin family. In terms of assembly, part of the t-SNARE complex.

The protein resides in the membrane. Vesicle trafficking protein that functions in the secretory pathway. This is Putative syntaxin-131 (SYP131) from Arabidopsis thaliana (Mouse-ear cress).